A 203-amino-acid chain; its full sequence is Putative 3-methyladenine DNA glycosylase (203 aa).

The protein belongs to the DNA glycosylase MPG family.

The polypeptide is Putative 3-methyladenine DNA glycosylase (Clostridium botulinum (strain Langeland / NCTC 10281 / Type F)).